Reading from the N-terminus, the 290-residue chain is MNSKTNQTAKTFGIVGFPLSHSLSPLIHNSIYKDRGIDASYLVFETPELNSKTIQEFRNSGILGLSVTIPHKEKAFLLADKADSTSTIMKASNTLLIGPDSIHAYNTDGEGAYRSILELSPESLNVGNTVILGSGGSARGIAYNLAASGKIQNLFLCSRNEMTAKEICFLISKNSNVKMEHITQDSLFSRKEEISLVIHTTPLGMKGQAPGPFLSEKFFNPNMTLFDIVYNPLETPLVKAAKKAGAKIIPGSEMLLHQAMKQFELFTGISPNASDILKTRERLSQTLTNQ.

Residues 22 to 24 and Thr-68 contribute to the shikimate site; that span reads SLS. The Proton acceptor role is filled by Lys-72. Shikimate is bound by residues Asn-93 and Asp-108. NADP(+)-binding positions include 133–137 and Ile-228; that span reads GSGGS. Residue Tyr-230 coordinates shikimate. Gly-251 serves as a coordination point for NADP(+).

This sequence belongs to the shikimate dehydrogenase family. As to quaternary structure, homodimer.

The catalysed reaction is shikimate + NADP(+) = 3-dehydroshikimate + NADPH + H(+). The protein operates within metabolic intermediate biosynthesis; chorismate biosynthesis; chorismate from D-erythrose 4-phosphate and phosphoenolpyruvate: step 4/7. Involved in the biosynthesis of the chorismate, which leads to the biosynthesis of aromatic amino acids. Catalyzes the reversible NADPH linked reduction of 3-dehydroshikimate (DHSA) to yield shikimate (SA). This chain is Shikimate dehydrogenase (NADP(+)), found in Leptospira borgpetersenii serovar Hardjo-bovis (strain JB197).